Reading from the N-terminus, the 460-residue chain is Bifunctional protein GlmU (460 aa).

A pyrophosphorylase region spans residues 1–229; sequence MTNYAIILAA…FNESLGVNDR (229 aa). Residues 8-11, Lys-22, Gln-72, and 77-78 contribute to the UDP-N-acetyl-alpha-D-glucosamine site; these read LAAG and GT. Position 102 (Asp-102) interacts with Mg(2+). Residues Gly-139, Glu-154, Asn-169, and Asn-227 each coordinate UDP-N-acetyl-alpha-D-glucosamine. Asn-227 is a Mg(2+) binding site. Residues 230-250 form a linker region; it reads VALATAETVMRQRITQKHMVN. Residues 251–460 form an N-acetyltransferase region; sequence GVTFHNPETV…RLAHHPSRSK (210 aa). UDP-N-acetyl-alpha-D-glucosamine is bound by residues Arg-332 and Lys-350. The active-site Proton acceptor is the His-362. UDP-N-acetyl-alpha-D-glucosamine-binding residues include Tyr-365 and Asn-376. Acetyl-CoA contacts are provided by residues Ala-379, 385–386, Ser-404, Ala-422, and Arg-439; that span reads NY.

In the N-terminal section; belongs to the N-acetylglucosamine-1-phosphate uridyltransferase family. It in the C-terminal section; belongs to the transferase hexapeptide repeat family. In terms of assembly, homotrimer. The cofactor is Mg(2+).

It localises to the cytoplasm. The catalysed reaction is alpha-D-glucosamine 1-phosphate + acetyl-CoA = N-acetyl-alpha-D-glucosamine 1-phosphate + CoA + H(+). It carries out the reaction N-acetyl-alpha-D-glucosamine 1-phosphate + UTP + H(+) = UDP-N-acetyl-alpha-D-glucosamine + diphosphate. It functions in the pathway nucleotide-sugar biosynthesis; UDP-N-acetyl-alpha-D-glucosamine biosynthesis; N-acetyl-alpha-D-glucosamine 1-phosphate from alpha-D-glucosamine 6-phosphate (route II): step 2/2. It participates in nucleotide-sugar biosynthesis; UDP-N-acetyl-alpha-D-glucosamine biosynthesis; UDP-N-acetyl-alpha-D-glucosamine from N-acetyl-alpha-D-glucosamine 1-phosphate: step 1/1. Its pathway is bacterial outer membrane biogenesis; LPS lipid A biosynthesis. Its function is as follows. Catalyzes the last two sequential reactions in the de novo biosynthetic pathway for UDP-N-acetylglucosamine (UDP-GlcNAc). The C-terminal domain catalyzes the transfer of acetyl group from acetyl coenzyme A to glucosamine-1-phosphate (GlcN-1-P) to produce N-acetylglucosamine-1-phosphate (GlcNAc-1-P), which is converted into UDP-GlcNAc by the transfer of uridine 5-monophosphate (from uridine 5-triphosphate), a reaction catalyzed by the N-terminal domain. The chain is Bifunctional protein GlmU from Streptococcus pyogenes serotype M49 (strain NZ131).